The sequence spans 176 residues: Dual-action ribosomal maturation protein DarP (176 aa).

This sequence belongs to the DarP family.

Its subcellular location is the cytoplasm. Member of a network of 50S ribosomal subunit biogenesis factors which assembles along the 30S-50S interface, preventing incorrect 23S rRNA structures from forming. Promotes peptidyl transferase center (PTC) maturation. The polypeptide is Dual-action ribosomal maturation protein DarP (Aliivibrio fischeri (strain MJ11) (Vibrio fischeri)).